The chain runs to 369 residues: Anhydro-N-acetylmuramic acid kinase (369 aa).

ATP is bound at residue 12–19; sequence GTSLDGVD.

Belongs to the anhydro-N-acetylmuramic acid kinase family.

It catalyses the reaction 1,6-anhydro-N-acetyl-beta-muramate + ATP + H2O = N-acetyl-D-muramate 6-phosphate + ADP + H(+). Its pathway is amino-sugar metabolism; 1,6-anhydro-N-acetylmuramate degradation. It participates in cell wall biogenesis; peptidoglycan recycling. Functionally, catalyzes the specific phosphorylation of 1,6-anhydro-N-acetylmuramic acid (anhMurNAc) with the simultaneous cleavage of the 1,6-anhydro ring, generating MurNAc-6-P. Is required for the utilization of anhMurNAc either imported from the medium or derived from its own cell wall murein, and thus plays a role in cell wall recycling. This chain is Anhydro-N-acetylmuramic acid kinase, found in Escherichia coli O81 (strain ED1a).